We begin with the raw amino-acid sequence, 425 residues long: Synaptotagmin-4 (425 aa).

Residues 1–16 (MAPITTSRVEFDEIPT) are Vesicular-facing. Residues 17–37 (VVGIFSAFGLVFTVSLFAWIC) form a helical membrane-spanning segment. At 38 to 425 (CQRRSAKSNK…IAKWHMLCDG (388 aa)) the chain is on the cytoplasmic side. Disordered regions lie at residues 102-121 (NGNFPKTNPKAGSSSDLENV) and 126-147 (FPETEKEAVSPESLKSSTSLTS). Residues 105–119 (FPKTNPKAGSSSDLE) show a composition bias toward polar residues. Ser-135 is modified (phosphoserine; by MAPK8). Low complexity predominate over residues 137–146 (ESLKSSTSLT). C2 domains follow at residues 153 to 274 (KLGT…MLMT) and 287 to 420 (GRGE…AKWH). Ca(2+) is bound by residues Asp-246, Ser-249, and Asp-252.

It belongs to the synaptotagmin family. As to quaternary structure, interacts with KIF1A; the interaction increases in presence of calcium and decreases when SYT4 is phosphorylated at Ser-135. The cofactor is Ca(2+). Post-translationally, phosphorylation at Ser-135 by MAPK8/JNK1 reduces interaction with KIF1A and neuronal dense core vesicles mobility. As to expression, widely expressed. Expressed in the brain. Expressed in pituitary gland, cerebellum, cortex, hypothalamus and hippocampus.

The protein localises to the cytoplasmic vesicle. The protein resides in the secretory vesicle. It localises to the neuronal dense core vesicle membrane. Functionally, synaptotagmin family member which does not bind Ca(2+). Involved in neuronal dense core vesicles (DCVs) mobility through its interaction with KIF1A. Upon increased neuronal activity, phosphorylation by MAPK8/JNK1 destabilizes the interaction with KIF1A and captures DCVs to synapses. Plays a role in dendrite formation by melanocytes. In Rattus norvegicus (Rat), this protein is Synaptotagmin-4 (Syt4).